A 287-amino-acid chain; its full sequence is Coatomer subunit epsilon-1 (287 aa).

This sequence belongs to the COPE family. As to quaternary structure, oligomeric complex that consists of at least the alpha, beta, beta', gamma, delta, epsilon and zeta subunits.

It is found in the cytoplasm. The protein localises to the golgi apparatus membrane. Its subcellular location is the cytoplasmic vesicle. It localises to the COPI-coated vesicle membrane. The coatomer is a cytosolic protein complex that binds to dilysine motifs and reversibly associates with Golgi non-clathrin-coated vesicles, which further mediate biosynthetic protein transport from the ER, via the Golgi up to the trans Golgi network. The coatomer complex is required for budding from Golgi membranes, and is essential for the retrograde Golgi-to-ER transport of dilysine-tagged proteins. The chain is Coatomer subunit epsilon-1 (COPE1) from Oryza sativa subsp. japonica (Rice).